The primary structure comprises 323 residues: tRNA U34 carboxymethyltransferase (323 aa).

Carboxy-S-adenosyl-L-methionine is bound by residues K91, W105, K110, G130, 180–181, M196, Y200, and R315; that span reads IE.

Belongs to the class I-like SAM-binding methyltransferase superfamily. CmoB family. In terms of assembly, homotetramer.

It carries out the reaction carboxy-S-adenosyl-L-methionine + 5-hydroxyuridine(34) in tRNA = 5-carboxymethoxyuridine(34) in tRNA + S-adenosyl-L-homocysteine + H(+). Its function is as follows. Catalyzes carboxymethyl transfer from carboxy-S-adenosyl-L-methionine (Cx-SAM) to 5-hydroxyuridine (ho5U) to form 5-carboxymethoxyuridine (cmo5U) at position 34 in tRNAs. This is tRNA U34 carboxymethyltransferase from Geobacter sp. (strain M21).